Reading from the N-terminus, the 116-residue chain is Flagellar transcriptional regulator FlhD (116 aa).

This sequence belongs to the FlhD family. As to quaternary structure, homodimer; disulfide-linked. Forms a heterohexamer composed of two FlhC and four FlhD subunits. Each FlhC binds a FlhD dimer, forming a heterotrimer, and a hexamer assembles by dimerization of two heterotrimers.

It localises to the cytoplasm. Its function is as follows. Functions in complex with FlhC as a master transcriptional regulator that regulates transcription of several flagellar and non-flagellar operons by binding to their promoter region. Activates expression of class 2 flagellar genes, including fliA, which is a flagellum-specific sigma factor that turns on the class 3 genes. Also regulates genes whose products function in a variety of physiological pathways. In Pantoea ananatis (strain LMG 20103), this protein is Flagellar transcriptional regulator FlhD.